Consider the following 418-residue polypeptide: Tyrosine--tRNA ligase (418 aa).

Tyr-34 is an L-tyrosine binding site. The 'HIGH' region motif lies at 39–48 (PTGDSMHIGH). L-tyrosine contacts are provided by Tyr-166 and Gln-170. The short motif at 228–232 (KFGKT) is the 'KMSKS' region element. Position 231 (Lys-231) interacts with ATP. The region spanning 350–417 (TNIVELLTET…KKNYFLAKVK (68 aa)) is the S4 RNA-binding domain.

This sequence belongs to the class-I aminoacyl-tRNA synthetase family. TyrS type 1 subfamily. In terms of assembly, homodimer.

Its subcellular location is the cytoplasm. The enzyme catalyses tRNA(Tyr) + L-tyrosine + ATP = L-tyrosyl-tRNA(Tyr) + AMP + diphosphate + H(+). Functionally, catalyzes the attachment of tyrosine to tRNA(Tyr) in a two-step reaction: tyrosine is first activated by ATP to form Tyr-AMP and then transferred to the acceptor end of tRNA(Tyr). This Levilactobacillus brevis (Lactobacillus brevis) protein is Tyrosine--tRNA ligase.